The chain runs to 212 residues: MLNVIATGLSLKARGKRRRQRWVDDGRVLALGESRRSSAISVADVVASLTRDVADFPVPGVEFKDLTPLFADRRGLAAVTEALADRASGADLVAGVDARGFLVAAAVATRLEVGVLAVRKGGKLPRPVLSEEYYREYGAATLEILAEGIEVAGRRVVIIDDVLATGGTIGATRRLLERGGANVAGAAVVVELAGLSGRAALAPLPVHSLSRL.

Belongs to the purine/pyrimidine phosphoribosyltransferase family. Homodimer.

Its subcellular location is the cytoplasm. The catalysed reaction is AMP + diphosphate = 5-phospho-alpha-D-ribose 1-diphosphate + adenine. It participates in purine metabolism; AMP biosynthesis via salvage pathway; AMP from adenine: step 1/1. In terms of biological role, catalyzes a salvage reaction resulting in the formation of AMP, that is energically less costly than de novo synthesis. This chain is Adenine phosphoribosyltransferase, found in Mycobacterium tuberculosis (strain CDC 1551 / Oshkosh).